The primary structure comprises 124 residues: Small ribosomal subunit protein bS6 (124 aa).

The protein belongs to the bacterial ribosomal protein bS6 family.

Binds together with bS18 to 16S ribosomal RNA. The polypeptide is Small ribosomal subunit protein bS6 (Haemophilus ducreyi (strain 35000HP / ATCC 700724)).